We begin with the raw amino-acid sequence, 255 residues long: Sugar fermentation stimulation protein homolog (255 aa).

It belongs to the SfsA family.

This chain is Sugar fermentation stimulation protein homolog, found in Synechococcus sp. (strain WH7803).